Reading from the N-terminus, the 92-residue chain is UPF0250 protein XOO3732 (92 aa).

Belongs to the UPF0250 family.

The chain is UPF0250 protein XOO3732 from Xanthomonas oryzae pv. oryzae (strain MAFF 311018).